The sequence spans 340 residues: SH2 domain-containing adapter protein D (340 aa).

Disordered regions lie at residues 1 to 77, 94 to 186, and 198 to 230; these read MAKW…PKHR, GGPG…QPWE, and VQFD…ERVD. Acidic residues predominate over residues 98 to 108; sequence EELEADTEYLD. Residues 171-186 are compositionally biased toward basic and acidic residues; the sequence is PQEDERPADEYDQPWE. Residues 240-335 form the SH2 domain; it reads WFHGPLNRAD…AEHLALLYPV (96 aa).

Post-translationally, tyrosine phosphorylated by ABL.

Its function is as follows. May function as an adapter protein. The sequence is that of SH2 domain-containing adapter protein D (SHD) from Homo sapiens (Human).